We begin with the raw amino-acid sequence, 278 residues long: Small ribosomal subunit protein uS5 (278 aa).

Residues 1–43 (MADAPAPAGGRGGFRGGFGGRGRGRGRGRGRGRGRGRGAKDGD) form a disordered region. The segment covering 9–21 (GGRGGFRGGFGGR) has biased composition (gly residues). Positions 22 to 37 (GRGRGRGRGRGRGRGR) are enriched in basic residues. Positions 88 to 151 (LKDEVLKIMP…ILAKLSVVPV (64 aa)) constitute an S5 DRBM domain.

It belongs to the universal ribosomal protein uS5 family.

Functionally, component of the ribosome, a large ribonucleoprotein complex responsible for the synthesis of proteins in the cell. The small ribosomal subunit (SSU) binds messenger RNAs (mRNAs) and translates the encoded message by selecting cognate aminoacyl-transfer RNA (tRNA) molecules. The large subunit (LSU) contains the ribosomal catalytic site termed the peptidyl transferase center (PTC), which catalyzes the formation of peptide bonds, thereby polymerizing the amino acids delivered by tRNAs into a polypeptide chain. The nascent polypeptides leave the ribosome through a tunnel in the LSU and interact with protein factors that function in enzymatic processing, targeting, and the membrane insertion of nascent chains at the exit of the ribosomal tunnel. Plays a role in the assembly and function of the 40S ribosomal subunit. Mutations in this protein affects the control of translational fidelity. Involved in nucleolar processing of pre-18S ribosomal RNA and ribosome assembly. The sequence is that of Small ribosomal subunit protein uS5 (RPS2) from Urechis caupo (Innkeeper worm).